A 78-amino-acid polypeptide reads, in one-letter code: Small ribosomal subunit protein bS18 (78 aa).

The protein belongs to the bacterial ribosomal protein bS18 family. Part of the 30S ribosomal subunit. Forms a tight heterodimer with protein bS6.

Functionally, binds as a heterodimer with protein bS6 to the central domain of the 16S rRNA, where it helps stabilize the platform of the 30S subunit. The sequence is that of Small ribosomal subunit protein bS18 from Kineococcus radiotolerans (strain ATCC BAA-149 / DSM 14245 / SRS30216).